We begin with the raw amino-acid sequence, 118 residues long: Small ribosomal subunit protein uS13 (118 aa).

A disordered region spans residues 95–118; sequence LPVRGQRTRTNARTRKGPKKLINK.

This sequence belongs to the universal ribosomal protein uS13 family. In terms of assembly, part of the 30S ribosomal subunit. Forms a loose heterodimer with protein S19. Forms two bridges to the 50S subunit in the 70S ribosome.

Located at the top of the head of the 30S subunit, it contacts several helices of the 16S rRNA. In the 70S ribosome it contacts the 23S rRNA (bridge B1a) and protein L5 of the 50S subunit (bridge B1b), connecting the 2 subunits; these bridges are implicated in subunit movement. Contacts the tRNAs in the A and P-sites. This Blochmanniella floridana protein is Small ribosomal subunit protein uS13.